A 249-amino-acid polypeptide reads, in one-letter code: NH(3)-dependent NAD(+) synthetase (249 aa).

Aspartate 34 contributes to the Mg(2+) binding site. Arginine 110 serves as a coordination point for deamido-NAD(+). ATP is bound at residue threonine 130. Residue glutamate 135 coordinates Mg(2+). Deamido-NAD(+) contacts are provided by lysine 143 and aspartate 150. Lysine 159 and serine 181 together coordinate ATP. Residue 232 to 233 coordinates deamido-NAD(+); the sequence is HK.

Belongs to the NAD synthetase family. In terms of assembly, homodimer.

It carries out the reaction deamido-NAD(+) + NH4(+) + ATP = AMP + diphosphate + NAD(+) + H(+). It functions in the pathway cofactor biosynthesis; NAD(+) biosynthesis; NAD(+) from deamido-NAD(+) (ammonia route): step 1/1. Functionally, catalyzes the ATP-dependent amidation of deamido-NAD to form NAD. Uses ammonia as a nitrogen source. This chain is NH(3)-dependent NAD(+) synthetase, found in Picrophilus torridus (strain ATCC 700027 / DSM 9790 / JCM 10055 / NBRC 100828 / KAW 2/3).